The chain runs to 70 residues: Brevinin-1MT2 (70 aa).

Residues Met-1 to Cys-22 form the signal peptide. Residues Glu-23–Glu-44 constitute a propeptide that is removed on maturation. Cys-64 and Cys-70 are disulfide-bonded.

Belongs to the frog skin active peptide (FSAP) family. Brevinin subfamily. In terms of tissue distribution, expressed by the skin glands.

The protein resides in the secreted. Functionally, antimicrobial peptide with activity against a variety of Gram-negative and Gram-positive bacteria and against fungi. Shows strong hemolytic activity against human erythrocytes. This Amolops mantzorum (Sichuan torrent frog) protein is Brevinin-1MT2.